The sequence spans 518 residues: Macrophage receptor MARCO (518 aa).

Residues 1–48 (MGSKELLKEEDFLGSTEDRADFDQAMFPVMETFEINDPVPKKRNGGTF) are Cytoplasmic-facing. A helical; Signal-anchor for type II membrane protein membrane pass occupies residues 49–69 (CMAVMAIHLILLTAGTALLLI). Over 70–518 (QVLNLQEQLQ…HNEDAGVECS (449 aa)) the chain is Extracellular. 2 N-linked (GlcNAc...) asparagine glycosylation sites follow: Asn87 and Asn138. Residues 147–426 (QIKGERGSPG…GESFQRVRIM (280 aa)) are disordered. In terms of domain architecture, Collagen-like spans 149-418 (KGERGSPGPK…QKGEKGQKGE (270 aa)). Low complexity predominate over residues 154–163 (SPGPKGAPGA). Positions 239–250 (KGEHGTKGDKGD) are enriched in basic and acidic residues. Low complexity-rich tracts occupy residues 293–314 (PGVK…QGAP) and 325–344 (RTGL…PGIA). Basic and acidic residues predominate over residues 410 to 421 (KGEKGQKGESFQ). Residues 423-518 (VRIMGGTNRG…HNEDAGVECS (96 aa)) enclose the SRCR domain. Intrachain disulfides connect Cys446/Cys507, Cys459/Cys517, and Cys487/Cys497.

In terms of assembly, homotrimer; disulfide-linked. Trimers may assemble in larger oligomers thus resulting in the creation of a large surface capable of interacting with very large ligands. Post-translationally, N-glycosylated. Expressed in subpopulations of macrophages in the spleen and the medullary cord of lymph nodes (at protein level).

It localises to the cell membrane. Its function is as follows. Pattern recognition receptor (PRR) which binds Gram-positive and Gram-negative bacteria. Also plays a role in binding of unopsonized particles by alveolar macrophages. Binds to the secretoglobin SCGB3A2. This is Macrophage receptor MARCO (Marco) from Mus musculus (Mouse).